The sequence spans 337 residues: UPF0252 protein PH1321 (337 aa).

The chain crosses the membrane as a helical span at residues 100–120; that stretch reads IIGMLFLVFIILPAITSNLWS.

This sequence belongs to the UPF0252 family.

It is found in the membrane. This Pyrococcus horikoshii (strain ATCC 700860 / DSM 12428 / JCM 9974 / NBRC 100139 / OT-3) protein is UPF0252 protein PH1321.